Consider the following 115-residue polypeptide: NAD(P)H-quinone oxidoreductase subunit M (115 aa).

The protein belongs to the complex I NdhM subunit family. As to quaternary structure, NDH-1 can be composed of about 15 different subunits; different subcomplexes with different compositions have been identified which probably have different functions.

The protein resides in the cellular thylakoid membrane. It catalyses the reaction a plastoquinone + NADH + (n+1) H(+)(in) = a plastoquinol + NAD(+) + n H(+)(out). It carries out the reaction a plastoquinone + NADPH + (n+1) H(+)(in) = a plastoquinol + NADP(+) + n H(+)(out). Its function is as follows. NDH-1 shuttles electrons from an unknown electron donor, via FMN and iron-sulfur (Fe-S) centers, to quinones in the respiratory and/or the photosynthetic chain. The immediate electron acceptor for the enzyme in this species is believed to be plastoquinone. Couples the redox reaction to proton translocation, and thus conserves the redox energy in a proton gradient. Cyanobacterial NDH-1 also plays a role in inorganic carbon-concentration. The protein is NAD(P)H-quinone oxidoreductase subunit M of Prochlorococcus marinus (strain MIT 9301).